We begin with the raw amino-acid sequence, 493 residues long: Endothelial lipase (493 aa).

An N-terminal signal peptide occupies residues 1 to 23 (MRDPVFLLGFWSLYCCFPAGSLT). C66 and C79 are disulfide-bonded. Residues N67 and N82 are each glycosylated (N-linked (GlcNAc...) asparagine). The active-site Nucleophile is the S171. The active-site Charge relay system is D195. A disulfide bond links C254 and C274. The active-site Charge relay system is H276. Intrachain disulfides connect C299–C318 and C310–C313. 327–339 (KMRKKRNSKMYLK) contributes to the heparin binding site. Residues 349-484 (YHYQLKVHMF…SPGQELWFYK (136 aa)) enclose the PLAT domain. N395 carries N-linked (GlcNAc...) asparagine glycosylation. Cysteines 465 and 485 form a disulfide.

Belongs to the AB hydrolase superfamily. Lipase family. Head to tail Homodimer. Interacts with apolipoprotein C-2.

The protein localises to the secreted. The catalysed reaction is a triacylglycerol + H2O = a diacylglycerol + a fatty acid + H(+). It carries out the reaction a 1,2-diacyl-sn-glycero-3-phosphocholine + H2O = a 2-acyl-sn-glycero-3-phosphocholine + a fatty acid + H(+). The enzyme catalyses 1,2,3-tri-(9Z-octadecenoyl)-glycerol + H2O = di-(9Z)-octadecenoylglycerol + (9Z)-octadecenoate + H(+). It catalyses the reaction 1,2,3-tributanoylglycerol + H2O = dibutanoylglycerol + butanoate + H(+). The catalysed reaction is 1,2-dihexadecanoyl-sn-glycero-3-phosphocholine + H2O = hexadecanoyl-sn-glycero-3-phosphocholine + hexadecanoate + H(+). Exerts both phospholipase and triglyceride lipase activities. More active as a phospholipase than a triglyceride lipase. Hydrolyzes triglycerides, both with short-chain fatty acyl groups (tributyrin) and long-chain fatty acyl groups (triolein) with similar levels of activity toward both types of substrates. Hydrolyzes high density lipoproteins (HDL) more efficiently than other lipoproteins. The protein is Endothelial lipase (Lipg) of Rattus norvegicus (Rat).